The chain runs to 422 residues: Glycine amidinotransferase, mitochondrial (422 aa).

The transit peptide at 1–37 (MLRVRCLRGGSRGAEAAHFIGSRLGRAFTGWVQRSLQ) directs the protein to the mitochondrion. Catalysis depends on residues Asp253 and His302. The Amidino-cysteine intermediate role is filled by Cys406. The residue at position 416 (Thr416) is a Phosphothreonine.

This sequence belongs to the amidinotransferase family. In terms of assembly, homodimer.

The protein localises to the mitochondrion inner membrane. The enzyme catalyses L-arginine + glycine = guanidinoacetate + L-ornithine. It functions in the pathway amine and polyamine biosynthesis; creatine biosynthesis; creatine from L-arginine and glycine: step 1/2. Functionally, catalyzes the biosynthesis of guanidinoacetate, the immediate precursor of creatine. Creatine plays a vital role in energy metabolism in muscle tissues. May play a role in embryonic and central nervous system development. This chain is Glycine amidinotransferase, mitochondrial, found in Gallus gallus (Chicken).